A 539-amino-acid polypeptide reads, in one-letter code: Carboxysome assembly protein CcmM (539 aa).

The interval methionine 1–threonine 214 is carbonic anhydrase-like domain. The disordered stretch occupies residues threonine 194–alanine 213. The RbcS-like repeat 1, SSUL1 repeat unit spans residues serine 226–serine 397. Intrachain disulfides connect cysteine 261–cysteine 279 and cysteine 377–cysteine 395. A RbcS-like repeat 2, SSUL2 repeat occupies leucine 341–proline 425. Residues glycine 427 to valine 459 form a disordered region. Positions serine 431–serine 457 are enriched in low complexity. Residues glycine 453–proline 539 form a RbcS-like repeat 3, SSUL3 repeat.

This sequence belongs to the gamma-class carbonic anhydrase family. In terms of assembly, probably a homotrimer. Purifies from carboxysomes in complex with both RuBisCO subunits and carbonic anhydrase (ccaA); the complex is probably associated with the carboxysome shell. Interacts with CcmN. Binds holo-RuBisCO (RbcL(8)-RbcS(8)) via its SSUL domains; the SSUL domain binds close to the equitorial domain of RuBisCO between RbcL dimers, with 1 M35 protein per dimer. As to quaternary structure, the short form purifies from carboxysomes in complex with both RuBisCO subunits; the complex is probably associated with the carboxysome shell. In terms of processing, identified as 2 proteins of 58 and 38 kDa by mass spectrometry, called M58 and M35, the shorter protein is translated starting at Val-216. Protease inhibitors do not alter the appearance of M35. In isolated carboxysomes M35 is 4-5 fold more abundant. The first amino acid (equivalent to Val-216) is not seen in Edman degradation, while Tyr-219 and Gln-222 may be post-translationally modified.

It localises to the carboxysome. Functions as a scaffold protein for the assembly of beta-carboxysomes, initiates carboxysome assembly by coalescing RuBisCO (ribulose bisphosphate carboxylase, rbcL-rbcS). Produced as a full-length (M58) and a shorter form (M35); both forms are required for correct carboxysome assembly and growth. The short form is more abundant. Despite its strong similarity to gamma-class carbonic anhydrase (CA) it does not have detectable CA activity. Its function is as follows. The M35 isoform is able to condense RuBisCO into a liquid matrix; the presence of disulfide bonds in M35 reduces affinity for RuBisCO, while mutating all 4 Cys to Ser causes a 4-fold increase in doubling time, more than 15% increase in CO(2) requirement, and abnormal carboxysomes. In terms of biological role, beta-carboxysome assembly initiates when soluble RuBisCO is condensed into a liquid matrix in a pre-carboxysome by the RbcS-like domains of probably both CcmM58 and CcmM35. CcmN interacts with the N-terminus of CcmM58, and then recruits the CcmK2 major shell protein plus other less abundant CcmK proteins via CcmN's encapsulation peptide. Shell formation requires CcmK proteins and CcmO. CcmL caps the otherwise elongated carboxysome. Once fully encapsulated carboxysomes are formed, they migrate within the cell probably via interactions with the cytoskeleton. The polypeptide is Carboxysome assembly protein CcmM (Synechococcus elongatus (strain ATCC 33912 / PCC 7942 / FACHB-805) (Anacystis nidulans R2)).